The chain runs to 181 residues: ATP-dependent protease subunit HslV (181 aa).

The active site involves T5. Na(+) is bound by residues A161, C164, and T167.

The protein belongs to the peptidase T1B family. HslV subfamily. As to quaternary structure, a double ring-shaped homohexamer of HslV is capped on each side by a ring-shaped HslU homohexamer. The assembly of the HslU/HslV complex is dependent on binding of ATP.

Its subcellular location is the cytoplasm. The catalysed reaction is ATP-dependent cleavage of peptide bonds with broad specificity.. Its activity is regulated as follows. Allosterically activated by HslU binding. Protease subunit of a proteasome-like degradation complex believed to be a general protein degrading machinery. In Sulfurimonas denitrificans (strain ATCC 33889 / DSM 1251) (Thiomicrospira denitrificans (strain ATCC 33889 / DSM 1251)), this protein is ATP-dependent protease subunit HslV.